Consider the following 385-residue polypeptide: Heptahelical transmembrane protein 4 (385 aa).

Residues 1-12 (MGDEAEIKEHLK) are compositionally biased toward basic and acidic residues. The tract at residues 1 to 22 (MGDEAEIKEHLKPQASSETMDK) is disordered. Topologically, residues 1–79 (MGDEAEIKEH…LSIFTIHNET (79 aa)) are cytoplasmic. Residues 80-100 (LNVWTHLIGFFLFLALTIYTA) traverse the membrane as a helical segment. Residues 101-191 (TKVPSVVDLH…LIFRPITRWP (91 aa)) are Extracellular-facing. Residues 192–212 (FYAFLGGAMFCLLASSTCHLL) form a helical membrane-spanning segment. Residues 213 to 228 (SCHSERVSYIMLRLDY) are Cytoplasmic-facing. The chain crosses the membrane as a helical span at residues 229–249 (AGIAALIATSFYPPVYYSFMC). Topologically, residues 250–256 (DPFFCNL) are extracellular. The helical transmembrane segment at 257 to 277 (YLGFITILGIATVLVSLLPVF) threads the bilayer. The Cytoplasmic segment spans residues 278-288 (QSPEFRVVRAS). A helical transmembrane segment spans residues 289–309 (LFFGMGFSGLAPILHKLIIFW). Residues 310–313 (DQPE) are Extracellular-facing. The helical transmembrane segment at 314–334 (ALHTTGYEILMGLLYGLGALV) threads the bilayer. Residues 335 to 356 (YATRIPERWMPGKFDIAGHSHQ) lie on the Cytoplasmic side of the membrane. Residues 357 to 377 (LFHVLVVAGAFTHYRAGLVYL) form a helical membrane-spanning segment.

The protein belongs to the ADIPOR family. As to expression, expressed in roots, leaves, stems and flowers.

The protein localises to the membrane. Functionally, may play a role in abiotic stress response. The sequence is that of Heptahelical transmembrane protein 4 (HHP4) from Arabidopsis thaliana (Mouse-ear cress).